Consider the following 99-residue polypeptide: Prostate and testis expressed protein 4 (99 aa).

Residues 1-23 form the signal peptide; it reads MNSVTKISTLLIVILSFLCFVEG. The UPAR/Ly6 domain occupies 24–99; it reads LICNSCEKSR…CCEKNLCNSF (76 aa). Intrachain disulfides connect Cys-26/Cys-52, Cys-29/Cys-37, Cys-44/Cys-70, and Cys-74/Cys-90.

Expressed in prostate, testis, eye, kidney and skeletal muscle. Expressed in the dorsal lobe of prostate. Not expressed in the ventral lobe of prostate.

The protein localises to the secreted. Functionally, enhances sperm motility. Binds to calmodulin and inhibits calcium transport into spermatozoa. May modulate the function of nicotinic acetylcholine receptors. The polypeptide is Prostate and testis expressed protein 4 (Pate4) (Mus musculus (Mouse)).